A 195-amino-acid chain; its full sequence is Sec-independent protein translocase protein TatB (195 aa).

The chain crosses the membrane as a helical span at residues 1–21; sequence MFDIGFSELVLIFIVGLVVLG. The disordered stretch occupies residues 166–195; sequence DESQFAAYYPPDDDLASPTPSQPQDKQNVS. Residues 183-195 are compositionally biased toward polar residues; it reads PTPSQPQDKQNVS.

Belongs to the TatB family. As to quaternary structure, the Tat system comprises two distinct complexes: a TatABC complex, containing multiple copies of TatA, TatB and TatC subunits, and a separate TatA complex, containing only TatA subunits. Substrates initially bind to the TatABC complex, which probably triggers association of the separate TatA complex to form the active translocon.

It is found in the cell inner membrane. Part of the twin-arginine translocation (Tat) system that transports large folded proteins containing a characteristic twin-arginine motif in their signal peptide across membranes. Together with TatC, TatB is part of a receptor directly interacting with Tat signal peptides. TatB may form an oligomeric binding site that transiently accommodates folded Tat precursor proteins before their translocation. In Actinobacillus pleuropneumoniae serotype 5b (strain L20), this protein is Sec-independent protein translocase protein TatB.